Consider the following 412-residue polypeptide: MPQKRPTLELGSVLVVGGCGFLGWHIVDQLLNFPSETDASVALPKPEGDSRFDNPRLADRYPRCVAKVSVLDLRTANNRLPGAQYYDGDITSEESLLAIFRKVKPDVVIHTATANVLEGNKELLRKVNVDGTKTLLEVAGGDRGDWGGKCKAFVYTSSASVLHDTQSDLKNVNEDWPLIRGKLQLEYYSDTKAEAEEIVLKYNRASPSSMVTCALRPAGIYGEKDTTFTFKVLEHAAKASPTVLRMQLGDNNNLFDFTYVGNVAYSHLLAAYRLLATQTRYESGQSGPLDHEKVDGEAFNITNDSPVYFWDITRAAWALAGKVVEPNQVWQLSEDLLGPVGAVLETVFGLIGKTPRLTRRIVRYSCMTRYYSCEKAKYRLGYSPIVSVPEGLSRAVGYVLARERLESEKKGL.

NADP(+) is bound by residues 17-23, 89-90, and 111-113; these read GGCGFLG, DI, and TAT. 2 residues coordinate substrate: serine 158 and tyrosine 188. NADP(+)-binding positions include tyrosine 188, lysine 192, and 217 to 220; that span reads PAGI. Lysine 192 acts as the Proton donor in catalysis.

The protein belongs to the 3-beta-HSD family. Heterotetramer of erg25, erg26, erg27 and erg28. Erg28 acts as a scaffold to tether erg27 and other 4,4-demethylation-related enzymes, forming a demethylation enzyme complex, in the endoplasmic reticulum.

It localises to the endoplasmic reticulum membrane. It participates in steroid metabolism; ergosterol biosynthesis. Sterol-C4-methyl oxidase; part of the third module of ergosterol biosynthesis pathway that includes the late steps of the pathway. Erg26 is a catalytic component of the C-4 demethylation complex that catalyzes the conversion of 4,4-dimethylfecosterol into fecosterol via 4-methylfecosterol. The third module or late pathway involves the ergosterol synthesis itself through consecutive reactions that mainly occur in the endoplasmic reticulum (ER) membrane. Firstly, the squalene synthase erg9 catalyzes the condensation of 2 farnesyl pyrophosphate moieties to form squalene, which is the precursor of all steroids. Squalene synthase is crucial for balancing the incorporation of farnesyl diphosphate (FPP) into sterol and nonsterol isoprene synthesis. Secondly, squalene is converted into lanosterol by the consecutive action of the squalene epoxidase erg1 and the lanosterol synthase erg7. Then, the delta(24)-sterol C-methyltransferase erg6 methylates lanosterol at C-24 to produce eburicol. Eburicol is the substrate of the sterol 14-alpha demethylase encoded by cyp51A and cyp51B, to yield 4,4,24-trimethyl ergosta-8,14,24(28)-trienol. The C-14 reductase erg24 then reduces the C14=C15 double bond which leads to 4,4-dimethylfecosterol. A sequence of further demethylations at C-4, involving the C-4 demethylation complex containing the C-4 methylsterol oxidases erg25A or erg25B, the sterol-4-alpha-carboxylate 3-dehydrogenase erg26 and the 3-keto-steroid reductase erg27, leads to the production of fecosterol via 4-methylfecosterol. The C-8 sterol isomerase erg2 then catalyzes the reaction which results in unsaturation at C-7 in the B ring of sterols and thus converts fecosterol to episterol. The sterol-C5-desaturase erg3B then catalyzes the introduction of a C-5 double bond in the B ring to produce 5-dehydroepisterol. The 2 other sterol-C5-desaturases, erg3A and erg3C, seem to be less important in ergosterol biosynthesis. The C-22 sterol desaturase erg5 further converts 5-dehydroepisterol into ergosta-5,7,22,24(28)-tetraen-3beta-ol by forming the C-22(23) double bond in the sterol side chain. Finally, ergosta-5,7,22,24(28)-tetraen-3beta-ol is substrate of the C-24(28) sterol reductases erg4A and erg4B to produce ergosterol. Possible alternative sterol biosynthetic pathways might exist from fecosterol to ergosterol, depending on the activities of the erg3 isoforms. In Aspergillus fumigatus (strain ATCC MYA-4609 / CBS 101355 / FGSC A1100 / Af293) (Neosartorya fumigata), this protein is Sterol-4-alpha-carboxylate 3-dehydrogenase erg26, decarboxylating.